Here is a 103-residue protein sequence, read N- to C-terminus: MYAVFQSGGKQHRVAEGHTVRLEKLEVATGSTVEFDQVLLIADGETVHVGAPLVAGGKVVAEVVSHGRGEKVTIVKFRRRKHHDKKMGHRQWFTEVKITAINA.

Belongs to the bacterial ribosomal protein bL21 family. In terms of assembly, part of the 50S ribosomal subunit. Contacts protein L20.

This protein binds to 23S rRNA in the presence of protein L20. This chain is Large ribosomal subunit protein bL21, found in Shewanella putrefaciens (strain CN-32 / ATCC BAA-453).